Here is a 331-residue protein sequence, read N- to C-terminus: Ketol-acid reductoisomerase (NADP(+)) (331 aa).

The 182-residue stretch at 1 to 182 (MATLYYDTDA…GGTRAGILET (182 aa)) folds into the KARI N-terminal Rossmann domain. Residues 25 to 28 (YGSQ), Ser-51, Ser-53, and 83 to 86 (DEFQ) each bind NADP(+). His-108 is an active-site residue. Gly-134 contacts NADP(+). Positions 183–328 (NFKEETETDL…KGLRAMFSWL (146 aa)) constitute a KARI C-terminal knotted domain. 4 residues coordinate Mg(2+): Asp-191, Glu-195, Glu-227, and Glu-231. Ser-252 provides a ligand contact to substrate.

The protein belongs to the ketol-acid reductoisomerase family. The cofactor is Mg(2+).

The enzyme catalyses (2R)-2,3-dihydroxy-3-methylbutanoate + NADP(+) = (2S)-2-acetolactate + NADPH + H(+). It catalyses the reaction (2R,3R)-2,3-dihydroxy-3-methylpentanoate + NADP(+) = (S)-2-ethyl-2-hydroxy-3-oxobutanoate + NADPH + H(+). It functions in the pathway amino-acid biosynthesis; L-isoleucine biosynthesis; L-isoleucine from 2-oxobutanoate: step 2/4. The protein operates within amino-acid biosynthesis; L-valine biosynthesis; L-valine from pyruvate: step 2/4. Functionally, involved in the biosynthesis of branched-chain amino acids (BCAA). Catalyzes an alkyl-migration followed by a ketol-acid reduction of (S)-2-acetolactate (S2AL) to yield (R)-2,3-dihydroxy-isovalerate. In the isomerase reaction, S2AL is rearranged via a Mg-dependent methyl migration to produce 3-hydroxy-3-methyl-2-ketobutyrate (HMKB). In the reductase reaction, this 2-ketoacid undergoes a metal-dependent reduction by NADPH to yield (R)-2,3-dihydroxy-isovalerate. In Synechococcus sp. (strain RCC307), this protein is Ketol-acid reductoisomerase (NADP(+)).